The chain runs to 302 residues: AT-hook motif nuclear-localized protein 29 (302 aa).

The disordered stretch occupies residues 1–95 (MDGGYDQSGG…KPPVIVTRDS (95 aa)). Residues 32–44 (QLHPLPQPQPQPQ) show a composition bias toward pro residues. Positions 72-84 (KRPRGRPPGSKNK) form a DNA-binding region, a.T hook. In terms of domain architecture, PPC spans 96–241 (PNVLRSHVLE…DEGGEGGEGG (146 aa)). The interval 164–169 (GRFEIL) is required for the binding to non-AHL interactors. Positions 229-279 (PLEDEGGEGGEGGEVGEGGGGEGGPPPATSSSPPSGAGQGQLRGNMSGYDQ) are disordered. Over residues 237-251 (GGEGGEVGEGGGGEG) the composition is skewed to gly residues.

In terms of assembly, homodimer. Interacts with AHL5, AHL12, AHL25, AHL27, TCP4, TCP13 and EF114. Expressed in the hypocotyl and the vascular tissue of seedling.

The protein resides in the nucleus. Transcription factor that specifically binds AT-rich DNA sequences related to the nuclear matrix attachment regions (MARs). Acts redundantly with AHL18, AHL22 and AHL27 in the regulation of flowering and regulation of the hypocotyl elongation. Acts redundantly with AHL27/ESC to modulate hypocotyl growth inhibition in response to light. The sequence is that of AT-hook motif nuclear-localized protein 29 from Arabidopsis thaliana (Mouse-ear cress).